Consider the following 469-residue polypeptide: Squamosa promoter-binding-like protein 3 (469 aa).

The interval 96–118 is disordered; the sequence is SAEEHDKNMDKGKSKVDDTGTSR. A compositionally biased stretch (basic and acidic residues) spans 97-115; the sequence is AEEHDKNMDKGKSKVDDTG. The SBP-type zinc finger occupies 179–256; sequence NPHCQVEGCN…HDHNARRRKP (78 aa). Positions 182, 187, 204, 207, 223, 226, 230, and 242 each coordinate Zn(2+). Residues 239 to 255 carry the Bipartite nuclear localization signal motif; the sequence is KRSCRRRLHDHNARRRK. Positions 446-469 are disordered; the sequence is NDDDEDHLQLPKPSYDNSHYDQMN. Polar residues predominate over residues 460 to 469; that stretch reads YDNSHYDQMN.

Ubiquitous.

The protein localises to the nucleus. Functionally, trans-acting factor that binds specifically to the consensus nucleotide sequence 5'-TNCGTACAA-3'. May be involved in panicle development. This chain is Squamosa promoter-binding-like protein 3 (SPL3), found in Oryza sativa subsp. indica (Rice).